A 372-amino-acid chain; its full sequence is Formylglycine-generating enzyme (372 aa).

Positions 1–31 are cleaved as a signal peptide; that stretch reads MAAPAREPALRCCIRLARVFLLLVLACEVAG. Residues cysteine 48 and cysteine 50 are joined by a disulfide bond. The disordered stretch occupies residues 61 to 80; sequence SSAAAQRYSREANAPGLTSG. A Ca(2+)-binding site is contributed by glutamate 128. Asparagine 139 carries N-linked (GlcNAc...) asparagine glycosylation. Intrachain disulfides connect cysteine 216–cysteine 363 and cysteine 233–cysteine 344. Ca(2+) contacts are provided by asparagine 257, isoleucine 258, aspartate 271, phenylalanine 273, asparagine 291, glycine 294, and glutamate 298. 2 residues coordinate Cu(2+): cysteine 334 and cysteine 339. The tract at residues 339 to 358 is interaction with sulfatases; that stretch reads CYRYRCAARSQNTPDSSASN.

The protein belongs to the sulfatase-modifying factor family. Monomer, homodimer and heterodimer with SUMF2. Cu(2+) serves as cofactor. In terms of processing, N-glycosylated. Contains high-mannose-type oligosaccharides.

Its subcellular location is the endoplasmic reticulum lumen. It catalyses the reaction L-cysteinyl-[sulfatase] + 2 a thiol + O2 = an organic disulfide + 3-oxo-L-alanyl-[sulfatase] + hydrogen sulfide + H2O + H(+). The protein operates within protein modification; sulfatase oxidation. Functionally, oxidase that catalyzes the conversion of cysteine to 3-oxoalanine on target proteins, using molecular oxygen and an unidentified reducing agent. 3-oxoalanine modification, which is also named formylglycine (fGly), occurs in the maturation of arylsulfatases and some alkaline phosphatases that use the hydrated form of 3-oxoalanine as a catalytic nucleophile. Known substrates include GALNS, ARSA, STS and ARSE. The protein is Formylglycine-generating enzyme of Mus musculus (Mouse).